The chain runs to 390 residues: Phosphopentomutase (390 aa).

Positions 11, 283, 288, 324, 325, and 336 each coordinate Mn(2+).

This sequence belongs to the phosphopentomutase family. Mn(2+) is required as a cofactor.

The protein resides in the cytoplasm. It catalyses the reaction 2-deoxy-alpha-D-ribose 1-phosphate = 2-deoxy-D-ribose 5-phosphate. The catalysed reaction is alpha-D-ribose 1-phosphate = D-ribose 5-phosphate. The protein operates within carbohydrate degradation; 2-deoxy-D-ribose 1-phosphate degradation; D-glyceraldehyde 3-phosphate and acetaldehyde from 2-deoxy-alpha-D-ribose 1-phosphate: step 1/2. Functionally, isomerase that catalyzes the conversion of deoxy-ribose 1-phosphate (dRib-1-P) and ribose 1-phosphate (Rib-1-P) to deoxy-ribose 5-phosphate (dRib-5-P) and ribose 5-phosphate (Rib-5-P), respectively. This is Phosphopentomutase from Alkaliphilus metalliredigens (strain QYMF).